The following is a 35-amino-acid chain: Coenzyme PQQ synthesis protein A (35 aa).

The segment at residues 16–20 (EINMY) is a cross-link (pyrroloquinoline quinone (Glu-Tyr)).

It belongs to the PqqA family.

The protein operates within cofactor biosynthesis; pyrroloquinoline quinone biosynthesis. Its function is as follows. Required for coenzyme pyrroloquinoline quinone (PQQ) biosynthesis. PQQ is probably formed by cross-linking a specific glutamate to a specific tyrosine residue and excising these residues from the peptide. In Ruegeria pomeroyi (strain ATCC 700808 / DSM 15171 / DSS-3) (Silicibacter pomeroyi), this protein is Coenzyme PQQ synthesis protein A.